The primary structure comprises 1224 residues: Potassium channel subfamily T member 1 (1224 aa).

A disordered region spans residues 1–37 (MARAKLPRSPSEGKAGPGDTPAGAAAPEEPHGLSPLL). At 1–79 (MARAKLPRSP…LFFIKNQRSS (79 aa)) the chain is on the cytoplasmic side. Low complexity predominate over residues 13–27 (GKAGPGDTPAGAAAP). The helical transmembrane segment at 80–112 (LRIRLFNFSLKLLTCLLYIVRVLLDNPDQGIGC) threads the bilayer. Topologically, residues 113 to 139 (WGCTKYNYTFNGSSSEFHWAPILWVER) are extracellular. N-linked (GlcNAc...) asparagine glycosylation is found at N119 and N123. A helical membrane pass occupies residues 140 to 164 (KMALWVIQVIVATISFLETMLIIYL). Residues 165–178 (SYKGNIWEQIFHVS) are Cytoplasmic-facing. Residues 179–194 (FVLEMINTLPFIITVF) form a helical membrane-spanning segment. The Extracellular portion of the chain corresponds to 195-201 (WPPLRNL). A helical transmembrane segment spans residues 202-219 (FIPVFLNCWLAKHALENM). Over 220–232 (INDFHRAILRTQS) the chain is Cytoplasmic. The helical transmembrane segment at 233–260 (AMFNQVLILFCTLLCLVFTGTCGIQHLE) threads the bilayer. The Extracellular portion of the chain corresponds to 261-267 (RAGGNLN). The pore-forming intramembrane region spans 268 to 288 (LLTSFYFCIVTFSTVGFGDVT). Residues V282 and G283 each contribute to the K(+) site. Over 289–290 (PK) the chain is Extracellular. The helical transmembrane segment at 291–324 (IWPSQLLVVILICVTLVVLPLQFEELVYLWMERQ) threads the bilayer. Over 325–1224 (KSGGNYSRHR…NPETRDETQL (900 aa)) the chain is Cytoplasmic. One can recognise an RCK N-terminal 1 domain in the interval 338–474 (EKHVVLCVSS…FHVKFADHVV (137 aa)). Na(+)-binding residues include L499, H502, S524, and N526. Positions 644–675 (QNTDCRPSQGGSGGDGTKLTLPTENGSGSRRP) are disordered. The span at 663–673 (TLPTENGSGSR) shows a compositional bias: polar residues. 2 residues coordinate Zn(2+): C744 and C745. 2 residues coordinate K(+): R747 and K750. 2 residues coordinate Na(+): R747 and K750. C752 and H754 together coordinate Zn(2+). The K(+) site is built by N755, Y757, Y763, and G764. Y757 is a binding site for Na(+). F765 lines the Na(+) pocket. Positions 767–907 (NKLIIVSAET…QFRAKDSYSL (141 aa)) constitute an RCK N-terminal 2 domain. K(+) contacts are provided by S773, L804, D806, G828, and D851. Disordered regions lie at residues 1038–1066 (REAK…ADPV) and 1198–1224 (SSSQ…ETQL). 2 stretches are compositionally biased toward low complexity: residues 1045-1055 (GTRAASGSGST) and 1198-1215 (SSSQ…SSCN).

It belongs to the potassium channel family. Calcium-activated (TC 1.A.1.3) subfamily. KCa4.1/KCNT1 sub-subfamily. As to quaternary structure, homotetramer; which constitutes the Na(+)-activated K(+) channel. Interacts with KCNT2; these heterodimer channels differ from the homomers in their unitary conductance, kinetic behavior, subcellular localization, and response to activation of protein kinase C. Interacts (via C-terminus) with FMR1; this interaction alters gating properties of KCNT1. Interacts with CRBN via its cytoplasmic C-terminus. In terms of processing, phosphorylated by protein kinase C. Phosphorylation of the C-terminal domain increases channel activity. In terms of tissue distribution, enriched in the brainstem and olfactory bulb and detected at significant levels in four different brain regions.

Its subcellular location is the cell membrane. It carries out the reaction K(+)(in) = K(+)(out). Its activity is regulated as follows. Activated by high intracellular Na(+). In addition to activation by Na(+), is cooperatively activated by intracellular Cl(-) levels. Inhibited by Zn(2+). Activated upon stimulation of G-protein coupled receptors, such as CHRM1 and GRIA1. Sodium-activated K(+) channel. Acts as an important mediator of neuronal membrane excitability. Contributes to the delayed outward currents. Regulates neuronal bursting in sensory neurons. Contributes to synaptic development and plasticity. This is Potassium channel subfamily T member 1 (Kcnt1) from Mus musculus (Mouse).